Consider the following 481-residue polypeptide: E3 ubiquitin-protein ligase makorin-1 (481 aa).

3 consecutive C3H1-type zinc fingers follow at residues Trp55–Ser82, Ser84–Pro111, and Glu208–Ser235. The interval Cys236–His263 is makorin-type Cys-His. The segment at Cys281–Arg335 adopts an RING-type zinc-finger fold. Residues Ala364–Pro393 form a C3H1-type 4 zinc finger.

As to quaternary structure, interacts with p53/TP53 and CDKN1A. Interacts with TERT, modulating telomere length homeostasis. Auto-ubiquitinated; which leads to proteasomal degradation. As to expression, highly expressed in embryo, in specific cell types of the central nervous system, in brain with the strongest levels of expression in the mantle layers and in testis. Moderate to low levels in somatic tissues.

It carries out the reaction S-ubiquitinyl-[E2 ubiquitin-conjugating enzyme]-L-cysteine + [acceptor protein]-L-lysine = [E2 ubiquitin-conjugating enzyme]-L-cysteine + N(6)-ubiquitinyl-[acceptor protein]-L-lysine.. The protein operates within protein modification; protein ubiquitination. Functionally, E3 ubiquitin ligase catalyzing the covalent attachment of ubiquitin moieties onto substrate proteins. These substrates include FILIP1, p53/TP53, CDKN1A and TERT. Keeps cells alive by suppressing p53/TP53 under normal conditions, but stimulates apoptosis by repressing CDKN1A under stress conditions. Acts as a negative regulator of telomerase. Has negative and positive effects on RNA polymerase II-dependent transcription. This chain is E3 ubiquitin-protein ligase makorin-1 (Mkrn1), found in Mus musculus (Mouse).